The primary structure comprises 1151 residues: Zinc finger protein ZFPM2 (1151 aa).

The span at 1-13 shows a compositional bias: basic residues; the sequence is MSRRKQSKPRQIK. The tract at residues 1–102 is disordered; it reads MSRRKQSKPR…ETDDWDGPGE (102 aa). Acidic residues-rich tracts occupy residues 18–33 and 70–82; these read DAIEDEEEECPSEETD and EGIQETAESDGDT. The CCHC FOG-type 1 zinc-finger motif lies at 244-277; the sequence is IVNKDIFPCKSCGIWYRSERNLQAHLMYYCSGRQ. Residues Cys252, Cys255, His268, and Cys273 each contribute to the Zn(2+) site. The segment at 296–320 adopts a C2H2-type 1 zinc-finger fold; sequence SLCPFPQCTKSFSNARALEMHLNSH. Lys324 is covalently cross-linked (Glycyl lysine isopeptide (Lys-Gly) (interchain with G-Cter in SUMO1)). 2 C2H2-type zinc fingers span residues 335–357 and 363–385; these read LKCTVCSYTADSVINFHQHLFSH and FRCNHCHFGFQTQRELLQHQELH. The disordered stretch occupies residues 389 to 487; that stretch reads GKLPRESDME…RLASSPVQPN (99 aa). 2 stretches are compositionally biased toward polar residues: residues 401-410 and 419-431; these read PSATEDSLQP and ELPQSQKAMQTKD. Lys444 is covalently cross-linked (Glycyl lysine isopeptide (Lys-Gly) (interchain with G-Cter in SUMO2)). Over residues 447–485 the composition is skewed to polar residues; it reads LFLTNQRPEIQPTTNKQSFSYTKIKSEPSSPRLASSPVQ. Lys471 participates in a covalent cross-link: Glycyl lysine isopeptide (Lys-Gly) (interchain with G-Cter in SUMO1). Residue Ser532 is modified to Phosphoserine. The CCHC FOG-type 2 zinc finger occupies 542–575; that stretch reads PLMPKGATCFECNITFNNLDNYLVHKKHYCSSRW. Residues Cys550, Cys553, His566, and Cys571 each coordinate Zn(2+). Phosphoserine is present on Ser581. The disordered stretch occupies residues 636–683; sequence GPNGKGHDKDFSTQTKKLSTSSNNDDKINGKPVDVKNPSVPLVDGESD. Positions 647-658 are enriched in polar residues; it reads STQTKKLSTSSN. Residues 681 to 714 form a CCHC FOG-type 3 zinc finger; sequence ESDPNKTTCEACNITFSRHETYMVHKQYYCATRH. Positions 689, 692, 705, and 710 each coordinate Zn(2+). Positions 736 to 740 match the Nuclear localization signal motif; that stretch reads RKRRK. The segment at 829-835 is interaction with CTBP2; that stretch reads PIDLSKK. Residues 848–881 form a CCHC FOG-type 4 zinc finger; that stretch reads KRLLDYHECTVCKISFNKVENYLAHKQNFCPVTA. Zn(2+)-binding residues include Cys856, Cys859, His872, and Cys877. Ser904 is subject to Phosphoserine. Glycyl lysine isopeptide (Lys-Gly) (interchain with G-Cter in SUMO1) cross-links involve residues Lys915 and Lys955. Position 1014 is a phosphoserine (Ser1014). The disordered stretch occupies residues 1051–1095; that stretch reads DERPAANPQQENISQNPQHEDDHKSPSWISENPLAANENVSPGIP. A compositionally biased stretch (polar residues) spans 1057 to 1067; the sequence is NPQQENISQNP. A CCHC FOG-type 5 zinc finger spans residues 1113-1146; that stretch reads QAPTSGKYCRLCDIQFNNLSNFITHKKFYCSSHA. Residues Cys1121, Cys1124, His1137, and Cys1142 each contribute to the Zn(2+) site.

Belongs to the FOG (Friend of GATA) family. Interacts with the N-terminal zinc-finger of GATA4, GATA5 and probably GATA6. Interacts with retinoid nuclear receptor RXRA when ligand bound. Interacts with corepressor CTBP2; this interaction is however not essential for corepressor activity. Able to bind GATA1 in vitro. Interacts with NR2F2 and NR2F6. Interacts with ATOH8; mediates indirect interaction with GATA4. Post-translationally, sumoylation reduces transcriptional repression activity. As to expression, widely expressed at low level.

The protein localises to the nucleus. Transcription regulator that plays a central role in heart morphogenesis and development of coronary vessels from epicardium, by regulating genes that are essential during cardiogenesis. Essential cofactor that acts via the formation of a heterodimer with transcription factors of the GATA family GATA4, GATA5 and GATA6. Such heterodimer can both activate or repress transcriptional activity, depending on the cell and promoter context. Also required in gonadal differentiation, possibly be regulating expression of SRY. Probably acts a corepressor of NR2F2. In Homo sapiens (Human), this protein is Zinc finger protein ZFPM2 (ZFPM2).